The following is a 347-amino-acid chain: Fructose-1,6-bisphosphatase class 1 2 (347 aa).

Mg(2+) is bound by residues E92, D111, L113, and D114. Substrate contacts are provided by residues 114–117 (DGSS) and N202. E274 lines the Mg(2+) pocket.

The protein belongs to the FBPase class 1 family. In terms of assembly, homotetramer. The cofactor is Mg(2+).

It is found in the cytoplasm. The catalysed reaction is beta-D-fructose 1,6-bisphosphate + H2O = beta-D-fructose 6-phosphate + phosphate. It participates in carbohydrate biosynthesis; Calvin cycle. The chain is Fructose-1,6-bisphosphatase class 1 2 from Bradyrhizobium sp. (strain BTAi1 / ATCC BAA-1182).